The chain runs to 454 residues: tRNA modification GTPase MnmE (454 aa).

(6S)-5-formyl-5,6,7,8-tetrahydrofolate-binding residues include arginine 23, glutamate 80, and lysine 120. Residues 216 to 377 (GMKVVIAGRP…LRNHLKQSMG (162 aa)) form the TrmE-type G domain. Asparagine 226 contacts K(+). Residues 226-231 (NAGKSS), 245-251 (TDIAGTT), 270-273 (DTAG), 335-338 (NKAD), and 358-360 (SAR) contribute to the GTP site. Mg(2+) is bound at residue serine 230. Positions 245, 247, and 250 each coordinate K(+). Threonine 251 contacts Mg(2+). Residue lysine 454 participates in (6S)-5-formyl-5,6,7,8-tetrahydrofolate binding.

It belongs to the TRAFAC class TrmE-Era-EngA-EngB-Septin-like GTPase superfamily. TrmE GTPase family. In terms of assembly, homodimer. Heterotetramer of two MnmE and two MnmG subunits. K(+) serves as cofactor.

It localises to the cytoplasm. Exhibits a very high intrinsic GTPase hydrolysis rate. Involved in the addition of a carboxymethylaminomethyl (cmnm) group at the wobble position (U34) of certain tRNAs, forming tRNA-cmnm(5)s(2)U34. In Shigella dysenteriae serotype 1 (strain Sd197), this protein is tRNA modification GTPase MnmE.